Reading from the N-terminus, the 335-residue chain is Probable cyclin-H (335 aa).

Belongs to the cyclin family. Cyclin C subfamily.

It localises to the nucleus. Its function is as follows. Regulates CDK7, the catalytic subunit of the CDK-activating kinase (CAK) enzymatic complex. The protein is Probable cyclin-H (CYCH) of Echinococcus multilocularis (Fox tapeworm).